We begin with the raw amino-acid sequence, 29 residues long: Kalata-B15 (29 aa).

A cross-link (cyclopeptide (Gly-Asp)) is located at residues 1–29 (GLPVCGESCFGGSCYTPGCSCTWPICTRD). 3 cysteine pairs are disulfide-bonded: Cys5–Cys19, Cys9–Cys21, and Cys14–Cys26.

In terms of processing, this is a cyclic peptide.

Functionally, probably participates in a plant defense mechanism. In Oldenlandia affinis, this protein is Kalata-B15.